The chain runs to 325 residues: Cytochrome c1, heme protein, mitochondrial (325 aa).

Residues 1–84 (MAAAAASLRG…AMALHSAVSA (84 aa)) constitute a mitochondrion transit peptide. Topologically, residues 85-281 (SDLELHPPSY…TFLRWASEPE (197 aa)) are mitochondrial intermembrane. Residues 108–209 (TSIRRGFQVY…IVRARHGGED (102 aa)) form the Cytochrome c domain. Heme c-binding residues include C121, C124, and H125. A Phosphoserine modification is found at S182. M244 serves as a coordination point for heme c. A helical membrane pass occupies residues 282–315 (HDHRKRMGLKMLMMMALLVPLVYTIKRHKWSVLK). Residues 316–325 (SRKLAYRPPK) are Mitochondrial matrix-facing.

The protein belongs to the cytochrome c family. Component of the ubiquinol-cytochrome c oxidoreductase (cytochrome b-c1 complex, complex III, CIII), a multisubunit enzyme composed of 11 subunits. The complex is composed of 3 respiratory subunits cytochrome b, cytochrome c1 and Rieske protein UQCRFS1, 2 core protein subunits UQCRC1/QCR1 and UQCRC2/QCR2, and 6 low-molecular weight protein subunits UQCRH/QCR6, UQCRB/QCR7, UQCRQ/QCR8, UQCR10/QCR9, UQCR11/QCR10 and subunit 9, the cleavage product of Rieske protein UQCRFS1. The complex exists as an obligatory dimer and forms supercomplexes (SCs) in the inner mitochondrial membrane with NADH-ubiquinone oxidoreductase (complex I, CI) and cytochrome c oxidase (complex IV, CIV), resulting in different assemblies (supercomplex SCI(1)III(2)IV(1) and megacomplex MCI(2)III(2)IV(2)). Interacts with FLVCR2; this interaction occurs in the absence of heme and is disrupted upon heme binding. Heme c is required as a cofactor.

It localises to the mitochondrion inner membrane. The catalysed reaction is a quinol + 2 Fe(III)-[cytochrome c](out) = a quinone + 2 Fe(II)-[cytochrome c](out) + 2 H(+)(out). Functionally, component of the ubiquinol-cytochrome c oxidoreductase, a multisubunit transmembrane complex that is part of the mitochondrial electron transport chain which drives oxidative phosphorylation. The respiratory chain contains 3 multisubunit complexes succinate dehydrogenase (complex II, CII), ubiquinol-cytochrome c oxidoreductase (cytochrome b-c1 complex, complex III, CIII) and cytochrome c oxidase (complex IV, CIV), that cooperate to transfer electrons derived from NADH and succinate to molecular oxygen, creating an electrochemical gradient over the inner membrane that drives transmembrane transport and the ATP synthase. The cytochrome b-c1 complex catalyzes electron transfer from ubiquinol to cytochrome c, linking this redox reaction to translocation of protons across the mitochondrial inner membrane, with protons being carried across the membrane as hydrogens on the quinol. In the process called Q cycle, 2 protons are consumed from the matrix, 4 protons are released into the intermembrane space and 2 electrons are passed to cytochrome c. Cytochrome c1 is a catalytic core subunit containing a c-type heme. It transfers electrons from the [2Fe-2S] iron-sulfur cluster of the Rieske protein to cytochrome c. The sequence is that of Cytochrome c1, heme protein, mitochondrial (CYC1) from Homo sapiens (Human).